We begin with the raw amino-acid sequence, 381 residues long: Probable tRNA sulfurtransferase (381 aa).

Positions 68 to 176 (DLALKLLKKV…NDGAYIFTEK (109 aa)) constitute a THUMP domain. ATP-binding positions include 194–195 (LI), K276, G298, and Q307.

Belongs to the ThiI family.

It localises to the cytoplasm. It catalyses the reaction [ThiI sulfur-carrier protein]-S-sulfanyl-L-cysteine + a uridine in tRNA + 2 reduced [2Fe-2S]-[ferredoxin] + ATP + H(+) = [ThiI sulfur-carrier protein]-L-cysteine + a 4-thiouridine in tRNA + 2 oxidized [2Fe-2S]-[ferredoxin] + AMP + diphosphate. The catalysed reaction is [ThiS sulfur-carrier protein]-C-terminal Gly-Gly-AMP + S-sulfanyl-L-cysteinyl-[cysteine desulfurase] + AH2 = [ThiS sulfur-carrier protein]-C-terminal-Gly-aminoethanethioate + L-cysteinyl-[cysteine desulfurase] + A + AMP + 2 H(+). It participates in cofactor biosynthesis; thiamine diphosphate biosynthesis. Its function is as follows. Catalyzes the ATP-dependent transfer of a sulfur to tRNA to produce 4-thiouridine in position 8 of tRNAs, which functions as a near-UV photosensor. Also catalyzes the transfer of sulfur to the sulfur carrier protein ThiS, forming ThiS-thiocarboxylate. This is a step in the synthesis of thiazole, in the thiamine biosynthesis pathway. The sulfur is donated as persulfide by IscS. This Methanocaldococcus jannaschii (strain ATCC 43067 / DSM 2661 / JAL-1 / JCM 10045 / NBRC 100440) (Methanococcus jannaschii) protein is Probable tRNA sulfurtransferase.